A 761-amino-acid polypeptide reads, in one-letter code: Mitochondrial inner membrane m-AAA protease component YTA10 (761 aa).

Topologically, residues 1-115 are mitochondrial matrix; sequence MMMWQRYARG…SLSEYFRSKE (115 aa). Residues 67–101 are disordered; it reads SWTRLNENRPNKEGEGKNNGNKDNNSNKEDGKDKR. 2 stretches are compositionally biased toward basic and acidic residues: residues 72 to 82 and 91 to 101; these read NENRPNKEGEG and NSNKEDGKDKR. Residues 116 to 136 form a helical membrane-spanning segment; the sequence is FANTMFLTIGFTIIFTLLTPS. Residues 137-223 are Mitochondrial intermembrane-facing; it reads SNNSGDDSNR…IPIKYIERSS (87 aa). The helical transmembrane segment at 224-244 threads the bilayer; it reads PFTFLFPFLPTIILLGGLYFI. Residues 245-761 lie on the Mitochondrial matrix side of the membrane; sequence TRKINSSPPN…EPPEAPAATN (517 aa). ATP-binding residues include Val-290, Ala-291, Thr-332, Gly-333, Lys-334, Thr-335, Leu-336, and His-472. His-558 contacts Zn(2+). Residue Glu-559 is part of the active site. The Zn(2+) site is built by His-562 and Asp-634.

In the N-terminal section; belongs to the AAA ATPase family. This sequence in the C-terminal section; belongs to the peptidase M41 family. As to quaternary structure, component of the 850 kDa m-AAA protease complex, a heterohexamer composed of YTA12/RCA1 and YTA10/AFG3. Associates with the prohibitin complex, composed of PHB1 and PHB2, inhibiting the activity of the m-AAA protease complex. It depends on Zn(2+) as a cofactor.

Its subcellular location is the mitochondrion inner membrane. The catalysed reaction is ATP + H2O = ADP + phosphate + H(+). Its activity is regulated as follows. ATP hydrolysis is coordinated within m-AAA protease ring complexes: ATP-binding to YTA10/AFG3 inhibits ATP hydrolysis by the neighboring subunit YTA12/RCA1, leading to coordinated ATP hydrolysis within the AAA ATPase ring. Functionally, catalytic component of the m-AAA protease, a protease that plays a key role in proteostasis of inner mitochondrial membrane proteins. YTA10/AFG3 possesses both ATPase and protease activities: the ATPase activity is required to unfold substrates, threading them into the internal proteolytic cavity for hydrolysis into small peptide fragments. The complex is necessary for the assembly of mitochondrial respiratory chain and ATPase complexes. The m-AAA protease carries out protein quality control in the inner membrane of the mitochondria by mediating degradation of mistranslated or misfolded polypeptides. It also mediates protein maturation of the mitochondrial ribosomal subunit MRPL32/bL32m by catalyzing the cleavage of the presequence of MRPL32/bL32m prior to assembly into the mitochondrial ribosome. Promotes maturation of cytochrome c peroxidase (CCP1) by acting as a membrane protein dislocase via its ATPase activity: pulls the CCP1 transmembrane to the matrix prior to processing by the rhomboid protease PCP1. The membrane protein dislocase activity is also required to dislocate moderately hydrophobic transmembrane segments from the membrane. This is Mitochondrial inner membrane m-AAA protease component YTA10 from Saccharomyces cerevisiae (strain ATCC 204508 / S288c) (Baker's yeast).